The sequence spans 251 residues: Probable transcriptional regulatory protein Amuc_0709 (251 aa).

It belongs to the TACO1 family.

It localises to the cytoplasm. In Akkermansia muciniphila (strain ATCC BAA-835 / DSM 22959 / JCM 33894 / BCRC 81048 / CCUG 64013 / CIP 107961 / Muc), this protein is Probable transcriptional regulatory protein Amuc_0709.